Consider the following 524-residue polypeptide: Ribose import ATP-binding protein RbsA (524 aa).

ABC transporter domains follow at residues 17–252 and 263–505; these read LQLD…GRSI and IGQP…VSQV. An ATP-binding site is contributed by 49 to 56; sequence GENGAGKS.

It belongs to the ABC transporter superfamily. Ribose importer (TC 3.A.1.2.1) family. In terms of assembly, the complex is composed of an ATP-binding protein (RbsA), two transmembrane proteins (RbsC) and a solute-binding protein (RbsB).

The protein resides in the cell membrane. The enzyme catalyses D-ribose(out) + ATP + H2O = D-ribose(in) + ADP + phosphate + H(+). Part of the ABC transporter complex RbsABC involved in ribose import. Responsible for energy coupling to the transport system. This is Ribose import ATP-binding protein RbsA from Corynebacterium glutamicum (strain ATCC 13032 / DSM 20300 / JCM 1318 / BCRC 11384 / CCUG 27702 / LMG 3730 / NBRC 12168 / NCIMB 10025 / NRRL B-2784 / 534).